Reading from the N-terminus, the 206-residue chain is Small ribosomal subunit protein uS4 (206 aa).

The tract at residues 28 to 52 (YLDRRPYAPGQHGQRRGRGRPSDYS) is disordered. Positions 96–171 (RRLDNVVFRM…QKRRRVSPWI (76 aa)) constitute an S4 RNA-binding domain.

It belongs to the universal ribosomal protein uS4 family. In terms of assembly, part of the 30S ribosomal subunit. Contacts protein S5. The interaction surface between S4 and S5 is involved in control of translational fidelity.

In terms of biological role, one of the primary rRNA binding proteins, it binds directly to 16S rRNA where it nucleates assembly of the body of the 30S subunit. Its function is as follows. With S5 and S12 plays an important role in translational accuracy. This Deinococcus geothermalis (strain DSM 11300 / CIP 105573 / AG-3a) protein is Small ribosomal subunit protein uS4.